The sequence spans 599 residues: UvrABC system protein C (599 aa).

Positions 15–93 (PCPGVYRMLD…IKALQPRYNV (79 aa)) constitute a GIY-YIG domain. A UVR domain is found at 202 to 237 (QQVINELVIRMEEASGQLAFEQAAYYRDRIASLRQI).

This sequence belongs to the UvrC family. Interacts with UvrB in an incision complex.

The protein resides in the cytoplasm. Its function is as follows. The UvrABC repair system catalyzes the recognition and processing of DNA lesions. UvrC both incises the 5' and 3' sides of the lesion. The N-terminal half is responsible for the 3' incision and the C-terminal half is responsible for the 5' incision. This chain is UvrABC system protein C, found in Nitrosococcus oceani (strain ATCC 19707 / BCRC 17464 / JCM 30415 / NCIMB 11848 / C-107).